The chain runs to 678 residues: Mitogen-activated protein kinase kinase kinase 7 (678 aa).

The region spanning 19–271 (ITLREKVGHG…YIVGVMHEIV (253 aa)) is the Protein kinase domain. Residues 25 to 33 (VGHGSYGVV) and Lys46 each bind ATP. Asp140 serves as the catalytic Proton acceptor. 4 disordered regions span residues 296–322 (DGTV…QLTP), 339–365 (TTSS…LDNN), 431–455 (DLSP…LTVT), and 616–647 (QLAA…HFLQ). Composition is skewed to low complexity over residues 313 to 322 (LSPSSTQLTP) and 339 to 352 (TTSS…STSS). Residues 353-364 (DITPTNSGQLDN) show a composition bias toward polar residues.

Belongs to the protein kinase superfamily. STE Ser/Thr protein kinase family. MAP kinase kinase kinase subfamily. The cofactor is Mg(2+).

The enzyme catalyses L-seryl-[protein] + ATP = O-phospho-L-seryl-[protein] + ADP + H(+). The catalysed reaction is L-threonyl-[protein] + ATP = O-phospho-L-threonyl-[protein] + ADP + H(+). Component of a protein kinase signal transduction cascade. Mediator of TGF-beta signal transduction. Responsible for activation of the JNK MAPK pathway (basket, bsk and hemipterous, hep) in response to LPS. Component of the NF-kappa-B pathway; relish-mediated JNK inhibition involves proteasomal degradation of Tak1; certain targets of Relish that are induced during immune responses may facilitate destruction of Tak1 and switch off the JNK cascade. Participates in diverse roles such as control of cell shape and regulation of apoptosis. This is Mitogen-activated protein kinase kinase kinase 7 (Tak1) from Drosophila melanogaster (Fruit fly).